The chain runs to 171 residues: MNHFELFGLPPQFSLDGSLLSSQFRELQKRFHPDNFATASERDRLLAVQKAAQINDAYQVLKNPISRAEYLLSQNGLEIRGEQQTMQDPMFLMEQMELREELEEIPHGSDAESALAAFDARVSKMYKQHLATIEQELNDAQWPQAADRVRKLKFIAKLKNEIELVEEKLFG.

A J domain is found at 2 to 74 (NHFELFGLPP…ISRAEYLLSQ (73 aa)).

This sequence belongs to the HscB family. As to quaternary structure, interacts with HscA and stimulates its ATPase activity.

In terms of biological role, co-chaperone involved in the maturation of iron-sulfur cluster-containing proteins. Seems to help targeting proteins to be folded toward HscA. The protein is Co-chaperone protein HscB homolog of Vibrio vulnificus (strain CMCP6).